The primary structure comprises 548 residues: Inosine-5'-monophosphate dehydrogenase (548 aa).

2 CBS domains span residues 121–201 (FILD…EDPV) and 205–261 (MSTE…PLAS). Residues 298–300 (DSS) and 348–350 (GMG) contribute to the NAD(+) site. Residues Gly-350 and Gly-352 each contribute to the K(+) site. Ser-353 is a binding site for IMP. Cys-355 provides a ligand contact to K(+). The active-site Thioimidate intermediate is Cys-355. Residues 388-390 (DGG) and 411-412 (GS) each bind IMP. The active-site Proton acceptor is the Arg-461. Gln-473 lines the IMP pocket. A disordered region spans residues 527 to 548 (ASAQTEGNVHGLHSHEKKLYSS). Ser-528 lines the K(+) pocket. Residues 539–548 (HSHEKKLYSS) show a composition bias toward basic and acidic residues.

This sequence belongs to the IMPDH/GMPR family. Homotetramer. It depends on K(+) as a cofactor.

It is found in the cytoplasm. The catalysed reaction is IMP + NAD(+) + H2O = XMP + NADH + H(+). It functions in the pathway purine metabolism; XMP biosynthesis via de novo pathway; XMP from IMP: step 1/1. With respect to regulation, mycophenolic acid (MPA) is a non-competitive inhibitor that prevents formation of the closed enzyme conformation by binding to the same site as the amobile flap. In contrast, mizoribine monophosphate (MZP) is a competitive inhibitor that induces the closed conformation. MPA is a potent inhibitor of mammalian IMPDHs but a poor inhibitor of the bacterial enzymes. MZP is a more potent inhibitor of bacterial IMPDH. Catalyzes the conversion of inosine 5'-phosphate (IMP) to xanthosine 5'-phosphate (XMP), the first committed and rate-limiting step in the de novo synthesis of guanine nucleotides, and therefore plays an important role in the regulation of cell growth. Part of the gene cluster that mediates the biosynthesis of mycophenolic acid (MPA), the first isolated antibiotic natural product in the world. Does not play a role in the biosynthesis of MPA, but is involved in self resistance to MPA, since MPA acts as an inhibitor of IMP dehydrogenases. This chain is Inosine-5'-monophosphate dehydrogenase, found in Penicillium brevicompactum.